A 1019-amino-acid polypeptide reads, in one-letter code: Insulin-degrading enzyme (1019 aa).

His108 provides a ligand contact to Zn(2+). The active-site Proton acceptor is Glu111. Zn(2+) contacts are provided by His112 and Glu189. Lys192 carries the N6-succinyllysine modification. Substrate contacts are provided by residues 336–342 and 359–363; these read HLIGHEG and LVGGQ. Residue Arg429 participates in ATP binding. Lys697 carries the post-translational modification N6-succinyllysine. The SlyX motif signature appears at 853-858; that stretch reads EKPPHY. 895–901 is a binding site for ATP; the sequence is DKPKKLS.

The protein belongs to the peptidase M16 family. As to quaternary structure, homodimer. Can also form homotetramers. (Microbial infection) Interacts (via N-terminus) with varicella-zoster virus (VZV) envelope glycoprotein E (via N-terminus); the membrane-associated isoform may function as an entry receptor for this virus. Requires Zn(2+) as cofactor. In terms of processing, the N-terminus is blocked. Detected in brain and in cerebrospinal fluid (at protein level).

It is found in the cytoplasm. The protein localises to the cytosol. Its subcellular location is the cell membrane. The protein resides in the secreted. It carries out the reaction Degradation of insulin, glucagon and other polypeptides. No action on proteins.. Activated by small peptides. Activated by ATP and GTP, and to a lesser extent by CTP, TTP and PPPi. Inhibited by bacitracin. In vitro modification of Cys residues impairs enzyme activity. Functionally, plays a role in the cellular breakdown of insulin, APP peptides, IAPP peptides, natriuretic peptides, glucagon, bradykinin, kallidin, and other peptides, and thereby plays a role in intercellular peptide signaling. Substrate binding induces important conformation changes, making it possible to bind and degrade larger substrates, such as insulin. Contributes to the regulation of peptide hormone signaling cascades and regulation of blood glucose homeostasis via its role in the degradation of insulin, glucagon and IAPP. Plays a role in the degradation and clearance of APP-derived amyloidogenic peptides that are secreted by neurons and microglia. Degrades the natriuretic peptides ANP, BNP and CNP, inactivating their ability to raise intracellular cGMP. Also degrades an aberrant frameshifted 40-residue form of NPPA (fsNPPA) which is associated with familial atrial fibrillation in heterozygous patients. Involved in antigen processing. Produces both the N terminus and the C terminus of MAGEA3-derived antigenic peptide (EVDPIGHLY) that is presented to cytotoxic T lymphocytes by MHC class I. In terms of biological role, (Microbial infection) The membrane-associated isoform acts as an entry receptor for varicella-zoster virus (VZV). This Homo sapiens (Human) protein is Insulin-degrading enzyme.